We begin with the raw amino-acid sequence, 158 residues long: Large ribosomal subunit protein bL19 (158 aa).

Basic and acidic residues predominate over residues Ser-119–Ala-129. The segment at Ser-119–Glu-158 is disordered. A compositionally biased stretch (low complexity) spans Arg-130–Gln-139. The span at Gly-140–Glu-158 shows a compositional bias: polar residues.

This sequence belongs to the bacterial ribosomal protein bL19 family.

Its function is as follows. This protein is located at the 30S-50S ribosomal subunit interface and may play a role in the structure and function of the aminoacyl-tRNA binding site. This Deinococcus geothermalis (strain DSM 11300 / CIP 105573 / AG-3a) protein is Large ribosomal subunit protein bL19.